We begin with the raw amino-acid sequence, 501 residues long: MESRLARLTTLQVTAGDNLRRTSIIGTIGPKTNNPEVLVALRKAGLNIVRMNFSHGSYEYHQSVIENARKSEELYPGRPLAIALDTKGPEIRTGTTTGEVDYPIPPNHEMIFSTDEKYAKACDDKVMFVDYANITKVISKGKIIYVDDGVLSFEVLEVVDGKTLKVKSLNAGKICSHKGVNLPGTDVDLPALSEKDKADLRFGVKNGVHMVFASFIRTAQDVLTIREVLGEDGKDIKIVVKIENQQGVNNFDEILKVTDAVMVARGDLGIEIPAPEVLAVQKKLIAKSNLAGKPVICATQMLESMTYNPRPTRAEVSDVGNAILDGADCVMLSGETAKGNYPINAVTTMADTALIAEQAIAYQPLYDDLRNLTPKPTSTTETVAASAVAAVYEQKAKAIIVLSTSGTTPRLVSKYRPDCPIILVTRNPRAARFSHLSRGVFPFVYEADSVADWTEDVELRLKFGIEKAIEMGVMKKGDTYVSIQGFKAGEGHSNTLQVSNA.

Arg50 contacts substrate. K(+) contacts are provided by Asn52, Ser54, Asp85, and Thr86. 52–55 (NFSH) contributes to the ATP binding site. ATP contacts are provided by Arg92 and Lys178. Glu243 is a binding site for Mg(2+). Substrate-binding residues include Gly266, Asp267, and Thr299. Asp267 is a Mg(2+) binding site.

The protein belongs to the pyruvate kinase family. Homotetramer. Mg(2+) is required as a cofactor. The cofactor is K(+).

The enzyme catalyses pyruvate + ATP = phosphoenolpyruvate + ADP + H(+). It functions in the pathway carbohydrate degradation; glycolysis; pyruvate from D-glyceraldehyde 3-phosphate: step 5/5. The polypeptide is Pyruvate kinase (PYK1) (Naumovozyma castellii (Yeast)).